We begin with the raw amino-acid sequence, 332 residues long: MSVKEDRNVYDVTIIGGGPTGMFAAFYGGLRQMKVKIIESLPQLGGQLAALYPEKYIYDVAGFPKVRAQELVNQLKEQMDLFSPTVCLNESVDTLEKQEDGTFKLVTNQQIHYSKTVIITAGNGAFQPRRLEIESASRYEGKNLHYFINDLGQFSGKRVLVCGGGDSAVDWSLMLEPIAQSVTIVHRRDKFRAHEHSVEQLKKSSVQVKTPFVPVELVGDEHAIRQVILEHVKEGTKETIDVDAVIVNYGFISSLGPIKNWGLDIEKNAIKVNSRMETNIPGVYAAGDICTYDGKIKLIACGFGEAPIAISSAKTYIDPTARMQPAHSTSLF.

Residues threonine 20, glutamate 39, glutamine 47, tyrosine 52, valine 92, phenylalanine 126, aspartate 288, and threonine 329 each coordinate FAD.

The protein belongs to the ferredoxin--NADP reductase type 2 family. As to quaternary structure, homodimer. Requires FAD as cofactor.

The enzyme catalyses 2 reduced [2Fe-2S]-[ferredoxin] + NADP(+) + H(+) = 2 oxidized [2Fe-2S]-[ferredoxin] + NADPH. The polypeptide is Ferredoxin--NADP reductase (Geobacillus kaustophilus (strain HTA426)).